The sequence spans 485 residues: MRLYNTLNRKKEEFVPLNGNKVNLYACGITAYDLCHIGHARSSVVFDILVRYLRFKGYDVTFVRNFTDIDDKIINRANETGVTSTELAEKFIGEFYVDMDKLNILRADIEPKCTEHIPEMIELTQTLIEKDHAYATPSGDVYFKVRSFDDYGKLSGRNIEDLQSGARIQPGEEKQDPLDFALWKAAKPGEPSWESPWGQGRPGWHLECSAMSEKYFELPFDIHGGGQDLSFPHHENEIAQSEAATGKEMARFWVHNGFVQINSEKMSKSLGNFFTIRDILDKFMPETLRYFLLTMHYRSPLDFSFEALEEAEKGIRRVYSALEQTAEALNKSKWSKAALPEEVLAEIEDAEKGWADAMEDDMNTAGAMGHMFTLIRLAGRIGEEKSWRKSEGGRDAWIRILEDMKKWGEVLGIFTRDPKEFLEELKLCMLERKGIEVAKVEELVAARQEARKNKDFARSDEIRDELIELGVEVKDTPQGAVWSVI.

Cys-27 contacts Zn(2+). Residues 29 to 39 (ITAYDLCHIGH) carry the 'HIGH' region motif. Zn(2+)-binding residues include Cys-208, His-233, and Glu-237. Residues 265–269 (KMSKS) carry the 'KMSKS' region motif. Lys-268 contributes to the ATP binding site.

The protein belongs to the class-I aminoacyl-tRNA synthetase family. Monomer. Requires Zn(2+) as cofactor.

The protein resides in the cytoplasm. It carries out the reaction tRNA(Cys) + L-cysteine + ATP = L-cysteinyl-tRNA(Cys) + AMP + diphosphate. This chain is Cysteine--tRNA ligase, found in Maridesulfovibrio salexigens (strain ATCC 14822 / DSM 2638 / NCIMB 8403 / VKM B-1763) (Desulfovibrio salexigens).